We begin with the raw amino-acid sequence, 118 residues long: DNA-binding protein SSO0352 (118 aa).

This sequence belongs to the PDCD5 family.

The sequence is that of DNA-binding protein SSO0352 from Saccharolobus solfataricus (strain ATCC 35092 / DSM 1617 / JCM 11322 / P2) (Sulfolobus solfataricus).